Reading from the N-terminus, the 76-residue chain is uncharacterized protein (76 aa).

A required for interaction with PPP3CA region spans residues 36-41 (PDIIIT). Phosphothreonine is present on residues Thr-44 and Thr-46.

As to quaternary structure, interacts (via PxIxIT motif, when phosphorylated on Thr-44) with PPP3CA. Not expressed in pancreatic duct cells (at protein level). Abundantly expressed in the pancreas and weakly expressed in the thyroid. As to expression, not expressed in pancreatic duct cells (at protein level). Abundantly expressed in the lymph node and weakly expressed in the stomach, trachea and bone marrow.

This is an uncharacterized protein from Homo sapiens (Human).